Reading from the N-terminus, the 227-residue chain is Probable proteasome subunit beta type-2 (227 aa).

Positions Met-1 to Gly-6 are cleaved as a propeptide — removed in mature form. Thr-7 functions as the Nucleophile in the catalytic mechanism.

The protein belongs to the peptidase T1B family. The 26S proteasome consists of a 20S proteasome core and two 19S regulatory subunits. The 20S proteasome core is composed of 28 subunits that are arranged in four stacked rings, resulting in a barrel-shaped structure. The two end rings are each formed by seven alpha subunits, and the two central rings are each formed by seven beta subunits. The catalytic chamber with the active sites is on the inside of the barrel.

The protein resides in the cytoplasm. The protein localises to the nucleus. The catalysed reaction is Cleavage of peptide bonds with very broad specificity.. Its function is as follows. The proteasome degrades poly-ubiquitinated proteins in the cytoplasm and in the nucleus. It is essential for the regulated turnover of proteins and for the removal of misfolded proteins. The proteasome is a multicatalytic proteinase complex that is characterized by its ability to cleave peptides with Arg, Phe, Tyr, Leu, and Glu adjacent to the leaving group at neutral or slightly basic pH. It has an ATP-dependent proteolytic activity. This is Probable proteasome subunit beta type-2 (PUP1) from Encephalitozoon cuniculi (strain GB-M1) (Microsporidian parasite).